The primary structure comprises 385 residues: Putative mitochondrial carrier protein TRV_02148.2 (385 aa).

Solcar repeat units lie at residues 24–124 (SNTL…LHAR) and 130–210 (RTAG…LRRR). A run of 5 helical transmembrane segments spans residues 30-47 (GTAI…DSIL), 132-150 (AGNE…KLFT), 184-207 (WSAY…YLAL), 263-279 (YTIC…LEVI), and 294-310 (VVTV…LYML).

This sequence belongs to the mitochondrial carrier (TC 2.A.29) family.

It localises to the mitochondrion inner membrane. Functionally, may function as a mitochondrial transporter. The sequence is that of Putative mitochondrial carrier protein TRV_02148.2 from Trichophyton verrucosum (strain HKI 0517).